Reading from the N-terminus, the 183-residue chain is Translation initiation factor IF-3 (183 aa).

Belongs to the IF-3 family. In terms of assembly, monomer.

The protein resides in the cytoplasm. Functionally, IF-3 binds to the 30S ribosomal subunit and shifts the equilibrium between 70S ribosomes and their 50S and 30S subunits in favor of the free subunits, thus enhancing the availability of 30S subunits on which protein synthesis initiation begins. The sequence is that of Translation initiation factor IF-3 from Yersinia pseudotuberculosis serotype O:1b (strain IP 31758).